Reading from the N-terminus, the 179-residue chain is ADP-ribosylation factor-like protein 5A (179 aa).

The N-myristoyl glycine moiety is linked to residue G2. Residues 23 to 30 (GLDNAGKT), 66 to 70 (DIGGQ), 125 to 128 (NKQD), and A159 each bind GTP.

The protein belongs to the small GTPase superfamily. Arf family.

In terms of biological role, lacks ADP-ribosylation enhancing activity. This chain is ADP-ribosylation factor-like protein 5A (ARL5A), found in Homo sapiens (Human).